The primary structure comprises 143 residues: Mediator of RNA polymerase II transcription subunit 10 (143 aa).

Residues 123-143 form a disordered region; the sequence is GAHSNTEISTNPGQKRQGNVS. Polar residues predominate over residues 124–143; it reads AHSNTEISTNPGQKRQGNVS.

It belongs to the Mediator complex subunit 10 family. As to quaternary structure, component of the Mediator complex.

It localises to the nucleus. Its function is as follows. Component of the Mediator complex, a coactivator involved in the regulated transcription of nearly all RNA polymerase II-dependent genes. Mediator functions as a bridge to convey information from gene-specific regulatory proteins to the basal RNA polymerase II transcription machinery. Mediator is recruited to promoters by direct interactions with regulatory proteins and serves as a scaffold for the assembly of a functional preinitiation complex with RNA polymerase II and the general transcription factors. This chain is Mediator of RNA polymerase II transcription subunit 10 (NUT2), found in Yarrowia lipolytica (strain CLIB 122 / E 150) (Yeast).